The chain runs to 185 residues: Elongation factor P (185 aa).

It belongs to the elongation factor P family.

The protein resides in the cytoplasm. Its pathway is protein biosynthesis; polypeptide chain elongation. Its function is as follows. Involved in peptide bond synthesis. Stimulates efficient translation and peptide-bond synthesis on native or reconstituted 70S ribosomes in vitro. Probably functions indirectly by altering the affinity of the ribosome for aminoacyl-tRNA, thus increasing their reactivity as acceptors for peptidyl transferase. The chain is Elongation factor P from Streptococcus pyogenes serotype M49 (strain NZ131).